A 1488-amino-acid polypeptide reads, in one-letter code: Eukaryotic translation initiation factor 4G (1488 aa).

3 disordered regions span residues 196-320 (VQHR…GQTS), 337-367 (DSEK…GKSE), and 415-707 (THQI…MTEA). 2 stretches are compositionally biased toward basic and acidic residues: residues 216–244 (VSEK…EKHP) and 274–299 (ADEK…RNDT). Polar residues-rich tracts occupy residues 300–310 (KNLPQQPQSAS), 345–360 (SKVS…SSIS), 448–464 (SLAT…SFVT), and 473–495 (CTTS…TQTL). A compositionally biased stretch (low complexity) spans 496–520 (SASVDASDVSEVNSGTSSESTSQST). Basic and acidic residues predominate over residues 555 to 566 (QVKHADGAKDES). Positions 627–646 (QEQSESVATSDGADSSSTVD) are enriched in polar residues. The segment covering 651–671 (LPEESEREVMCEDDGKKKVEP) has biased composition (basic and acidic residues). Positions 683-696 (PKLQSSDSGNQASA) are enriched in polar residues. The segment at 709–721 (GRKKYSRDFLLTF) is EIF4E-binding. Positions 753–784 (DREPHPSSARGSDRPTSRGDRRGPAMDDDKWL) are enriched in basic and acidic residues. Disordered stretches follow at residues 753-795 (DREP…PNRD), 974-1000 (RGER…EREE), and 1107-1299 (WQQR…SEEE). The 224-residue stretch at 883–1106 (QRQLKAILNK…RDSIDLRKNK (224 aa)) folds into the MIF4G domain. The span at 978–989 (EEAEADKTEEEG) shows a compositional bias: acidic residues. 4 stretches are compositionally biased toward basic and acidic residues: residues 990 to 1000 (EIKQTKEEREE), 1111 to 1132 (RKVD…ERHA), 1181 to 1191 (IRYEQERHQFD), and 1254 to 1267 (TRED…DRFS). Positions 1273-1294 (AAQSASSSHRPASQEGRSGNKS) are enriched in polar residues. The 125-residue stretch at 1299–1423 (ELREKSIATI…VLQDVGKLIE (125 aa)) folds into the MI domain.

This sequence belongs to the eukaryotic initiation factor 4G family. EIF4F is a multi-subunit complex, the composition of which varies with external and internal environmental conditions. It is composed of at least EIF4A, EIF4E and EIF4G. In higher plants two isoforms of EIF4F have been identified, named isoform EIF4F and isoform EIF(iso)4F. Isoform EIF4F has subunits p220 and p26, whereas isoform EIF(iso)4F has subunits p82 and p28.

Functionally, component of the protein complex eIF4F, which is involved in the recognition of the mRNA cap, ATP-dependent unwinding of 5'-terminal secondary structure and recruitment of mRNA to the ribosome. The protein is Eukaryotic translation initiation factor 4G of Triticum aestivum (Wheat).